The sequence spans 43 residues: Protein PsbN (43 aa).

Residues 7 to 27 traverse the membrane as a helical segment; that stretch reads VTIFISGLLVSFTGYALYIAF.

This sequence belongs to the PsbN family.

The protein resides in the plastid. It is found in the chloroplast thylakoid membrane. In terms of biological role, may play a role in photosystem I and II biogenesis. The chain is Protein PsbN from Dioscorea bulbifera (Air potato).